A 219-amino-acid polypeptide reads, in one-letter code: Cytidylate kinase (219 aa).

15-23 (GPAASGKGT) is an ATP binding site.

The protein belongs to the cytidylate kinase family. Type 1 subfamily.

Its subcellular location is the cytoplasm. The catalysed reaction is CMP + ATP = CDP + ADP. It catalyses the reaction dCMP + ATP = dCDP + ADP. The sequence is that of Cytidylate kinase from Brucella melitensis biotype 1 (strain ATCC 23456 / CCUG 17765 / NCTC 10094 / 16M).